The chain runs to 820 residues: Protein phosphatase 1 regulatory subunit 29 (820 aa).

A signal peptide spans 1-22 (MLRLGLCAAALLCVCRPGAVRA). Topologically, residues 23–397 (DCWLIEGDKG…APSTSTTTHY (375 aa)) are extracellular. N-linked (GlcNAc...) asparagine glycosylation is present at Asn-54. LRR repeat units lie at residues 56 to 77 (TVHDLRLNENKLKAVLYSSLNR), 80 to 101 (NLTDLNLTKNEISYIEDGAFLG), 104 to 125 (SLQVLQLGYNKLSNLTEGMLRG), 128 to 149 (RLQFLFVQHNLIEVVTPTAFSE), and 152 to 173 (SLISIDLSSNRLSRLDGATFAS). 3 N-linked (GlcNAc...) asparagine glycosylation sites follow: Asn-80, Asn-85, and Asn-117. The 63-residue stretch at 185-247 (NPFNCECDLF…ITVLQAKCRN (63 aa)) folds into the LRRCT domain. 2 N-linked (GlcNAc...) asparagine glycosylation sites follow: Asn-205 and Asn-247. The tract at residues 250-294 (LPARPVSHPTPYSTDAQREPDENSGFNPDEILSVEPPASSTTDAS) is disordered. The Fibronectin type-III domain occupies 292–379 (DASAGPAIKL…FNHTCLTFTT (88 aa)). Residues 398-418 (IMTILGCLFGMVIVLGAVYYC) form a helical membrane-spanning segment. Residues 419–820 (LRKRRMQEEK…WKGVSAQQKL (402 aa)) lie on the Cytoplasmic side of the membrane. 2 disordered regions span residues 508 to 527 (GAGGDGLARPEDDLPDLENG) and 589 to 612 (SATGPGALERPSFLSPPYKESSHH). 3 positions are modified to phosphoserine: Ser-619, Ser-668, and Ser-672. The segment at 654–677 (TGLAKGDSKYIEKGSPLNSPLDRL) is disordered.

As to quaternary structure, interacts with PPP1CA.

It localises to the membrane. Functionally, inhibits phosphatase activity of protein phosphatase 1 (PP1) complexes. This is Protein phosphatase 1 regulatory subunit 29 (ELFN2) from Homo sapiens (Human).